The following is a 163-amino-acid chain: Outer membrane protein assembly factor BamE (163 aa).

A signal peptide spans 1-22; the sequence is MINKKQSLTLLSAIALSVSLSA. The N-palmitoyl cysteine moiety is linked to residue Cys23. Cys23 carries S-diacylglycerol cysteine lipidation. The tract at residues 122–163 is disordered; sequence EQSKLPMVNTTESAPQVPAQRPDEKPLVKENQTEAQVQKPIK. Positions 142–153 are enriched in basic and acidic residues; the sequence is RPDEKPLVKENQ.

This sequence belongs to the BamE family. As to quaternary structure, part of the Bam complex.

The protein resides in the cell outer membrane. In terms of biological role, part of the outer membrane protein assembly complex, which is involved in assembly and insertion of beta-barrel proteins into the outer membrane. The sequence is that of Outer membrane protein assembly factor BamE from Shewanella oneidensis (strain ATCC 700550 / JCM 31522 / CIP 106686 / LMG 19005 / NCIMB 14063 / MR-1).